The primary structure comprises 463 residues: Elongation factor 1-alpha 1 (463 aa).

The region spanning 5 to 242 (KIHINIVVIG…DAILPPARPT (238 aa)) is the tr-type G domain. The interval 14–21 (GHVDSGKS) is G1. Residue 14 to 21 (GHVDSGKS) participates in GTP binding. Positions 70–74 (GITID) are G2. The interval 91-94 (DAPG) is G3. Residues 91–95 (DAPGH) and 153–156 (NKMD) each bind GTP. The segment at 153 to 156 (NKMD) is G4. A G5 region spans residues 194 to 196 (SGW). 5-glutamyl glycerylphosphorylethanolamine is present on residues glutamate 301 and glutamate 374.

The protein belongs to the TRAFAC class translation factor GTPase superfamily. Classic translation factor GTPase family. EF-Tu/EF-1A subfamily.

It is found in the cytoplasm. Its function is as follows. This protein promotes the GTP-dependent binding of aminoacyl-tRNA to the A-site of ribosomes during protein biosynthesis. The polypeptide is Elongation factor 1-alpha 1 (Drosophila melanogaster (Fruit fly)).